The sequence spans 125 residues: Large ribosomal subunit protein bL12 (125 aa).

Belongs to the bacterial ribosomal protein bL12 family. In terms of assembly, homodimer. Part of the ribosomal stalk of the 50S ribosomal subunit. Forms a multimeric L10(L12)X complex, where L10 forms an elongated spine to which 2 to 4 L12 dimers bind in a sequential fashion. Binds GTP-bound translation factors.

Its function is as follows. Forms part of the ribosomal stalk which helps the ribosome interact with GTP-bound translation factors. Is thus essential for accurate translation. The polypeptide is Large ribosomal subunit protein bL12 (Dictyoglomus thermophilum (strain ATCC 35947 / DSM 3960 / H-6-12)).